Reading from the N-terminus, the 338-residue chain is Ferrochelatase (338 aa).

2 residues coordinate Fe cation: His-189 and Glu-293.

Belongs to the ferrochelatase family.

The protein resides in the cytoplasm. It catalyses the reaction heme b + 2 H(+) = protoporphyrin IX + Fe(2+). It participates in porphyrin-containing compound metabolism; protoheme biosynthesis; protoheme from protoporphyrin-IX: step 1/1. Catalyzes the ferrous insertion into protoporphyrin IX. This chain is Ferrochelatase, found in Azotobacter vinelandii (strain DJ / ATCC BAA-1303).